A 290-amino-acid chain; its full sequence is Transcription cofactor vestigial-like protein 4 (290 aa).

Met-1 carries the N-acetylmethionine modification. Positions 17-30 (ADDEKREAALRGEP) are enriched in basic and acidic residues. 4 disordered regions span residues 17 to 65 (ADDE…PGDE), 85 to 106 (LNKTANGDCRRDPRERSRSPIE), 140 to 161 (LDASRPAGLSPTLTPGERQQNR), and 254 to 290 (AAKDGASSSPESASRRGQPASPSAHMVSHSHSPSVVS). At Ser-52 the chain carries Phosphoserine. Positions 92–105 (DCRRDPRERSRSPI) are enriched in basic and acidic residues. Position 149 is a phosphoserine (Ser-149). A compositionally biased stretch (polar residues) spans 150–161 (PTLTPGERQQNR). Residue Thr-153 is modified to Phosphothreonine. Residues 272–290 (PASPSAHMVSHSHSPSVVS) are compositionally biased toward low complexity. A Phosphoserine modification is found at Ser-274.

It belongs to the vestigial family. In terms of assembly, interacts with TEFs. Interacts with IRF2BP2.

It is found in the nucleus. In terms of biological role, may act as a specific coactivator for the mammalian TEFs. The protein is Transcription cofactor vestigial-like protein 4 of Homo sapiens (Human).